A 219-amino-acid polypeptide reads, in one-letter code: MNIILLGPPGAGKGTQATNICNKYSIPQISTGDMLRVAVKVGTPLGIEAKKIMDSGGLVSDNIIINLVKERIQHSDCKNGFLFDGFPRTITQAEALRKDSVKINFVIEIQVPDQEIIARMSGRRTHLKSGRTYHITYNQPKVEGIDDITGEKLVQRSDDSENTVRSRLDIYHNQTQPLVNYYQSWMDKDSNAPKYAAAIGIGTLDEVKDRIYNSLISYD.

Residue 10 to 15 (GAGKGT) coordinates ATP. The interval 30 to 59 (STGDMLRVAVKVGTPLGIEAKKIMDSGGLV) is NMP. Residues threonine 31, arginine 36, 57 to 59 (GLV), 85 to 88 (GFPR), and glutamine 92 contribute to the AMP site. The LID stretch occupies residues 122–159 (GRRTHLKSGRTYHITYNQPKVEGIDDITGEKLVQRSDD). ATP contacts are provided by residues arginine 123 and 132 to 133 (TY). Arginine 156 and arginine 167 together coordinate AMP. Residue glycine 202 participates in ATP binding.

The protein belongs to the adenylate kinase family. Monomer.

The protein localises to the cytoplasm. It carries out the reaction AMP + ATP = 2 ADP. It participates in purine metabolism; AMP biosynthesis via salvage pathway; AMP from ADP: step 1/1. Its function is as follows. Catalyzes the reversible transfer of the terminal phosphate group between ATP and AMP. Plays an important role in cellular energy homeostasis and in adenine nucleotide metabolism. This is Adenylate kinase from Vesicomyosocius okutanii subsp. Calyptogena okutanii (strain HA).